The chain runs to 137 residues: Large ribosomal subunit protein uL16 (137 aa).

This sequence belongs to the universal ribosomal protein uL16 family. Part of the 50S ribosomal subunit.

Binds 23S rRNA and is also seen to make contacts with the A and possibly P site tRNAs. The chain is Large ribosomal subunit protein uL16 from Mesorhizobium japonicum (strain LMG 29417 / CECT 9101 / MAFF 303099) (Mesorhizobium loti (strain MAFF 303099)).